The sequence spans 87 residues: Alpha-elapitoxin-Ls2a (87 aa).

Residues 1 to 21 (MKTLLLTLVVVTIVCLDLGYT) form the signal peptide. Intrachain disulfides connect C24/C41, C34/C62, C47/C51, C66/C77, and C78/C83.

Belongs to the three-finger toxin family. Long-chain subfamily. Type II alpha-neurotoxin sub-subfamily. Expressed by the venom gland.

The protein localises to the secreted. Functionally, binds with high affinity to muscular (tested on Torpedo marmorata, Kd=1.6 nM) and neuronal (chimeric alpha-7/CHRNA7, Kd=3 nM) nicotinic acetylcholine receptor (nAChR) and inhibits acetylcholine from binding to the receptor, thereby impairing neuromuscular and neuronal transmission. Also shows a very weak inhibition on GABA(A) receptors. The toxin (10 uM) inhibits 83% of current in channels composed of alpha-1-beta-3-gamma-2 (GABRA1-GABRB3-GABRG2) subunits, 39% of current in channels composed of alpha-2-beta-2-gamma-2 (GABRA2-GABRB2-GABRG2) subunits, and 33% of current in channels composed of alpha-5-beta-2-gamma-2 (GABRA5-GABRB2-GABRG2) subunits. This Laticauda semifasciata (Black-banded sea krait) protein is Alpha-elapitoxin-Ls2a.